We begin with the raw amino-acid sequence, 278 residues long: Probable septum site-determining protein MinC (278 aa).

The interval Arg104 to Ser167 is disordered.

Belongs to the MinC family. Interacts with MinD and FtsZ.

Cell division inhibitor that blocks the formation of polar Z ring septums. Rapidly oscillates between the poles of the cell to destabilize FtsZ filaments that have formed before they mature into polar Z rings. Prevents FtsZ polymerization. This Bordetella avium (strain 197N) protein is Probable septum site-determining protein MinC.